The sequence spans 366 residues: Aminomethyltransferase (366 aa).

Belongs to the GcvT family. The glycine cleavage system is composed of four proteins: P, T, L and H.

It catalyses the reaction N(6)-[(R)-S(8)-aminomethyldihydrolipoyl]-L-lysyl-[protein] + (6S)-5,6,7,8-tetrahydrofolate = N(6)-[(R)-dihydrolipoyl]-L-lysyl-[protein] + (6R)-5,10-methylene-5,6,7,8-tetrahydrofolate + NH4(+). In terms of biological role, the glycine cleavage system catalyzes the degradation of glycine. This chain is Aminomethyltransferase, found in Bacillus velezensis (strain DSM 23117 / BGSC 10A6 / LMG 26770 / FZB42) (Bacillus amyloliquefaciens subsp. plantarum).